Reading from the N-terminus, the 1431-residue chain is Trophinin (1431 aa).

Disordered regions lie at residues 1 to 24 (MDRR…PGSL), 341 to 365 (SRAR…QGAQ), and 401 to 433 (PTTR…PWGR). Residues 405–415 (TRGKRNRKSKH) are compositionally biased toward basic residues. Positions 444–642 (LQERANKLVK…KDWAVQYREA (199 aa)) constitute an MAGE domain. 2 consecutive repeat copies span residues 751–760 (FSGGPGITFG) and 769–778 (FSNTASISFG). The tract at residues 751–1430 (FSGGPGITFG…ASLGACGFSY (680 aa)) is 62 X 10 AA approximate tandem repeats. A 3; approximate repeat occupies 779 to 786 (GTLSTSSS). A run of 2 repeats spans residues 787–796 (FSSAASISFG) and 805–814 (FSSEASISFG). Residues 823-833 (FSGGVSSSFSG) form a 6; approximate repeat. Repeat unit 7 spans residues 841–850 (FSGGASSGFG). The 8; approximate repeat unit spans residues 859 to 870 (FSGVLSTSTSFG). Residues 879 to 890 (FSSALSTSTGFG) form a 9; approximate repeat. 5 tandem repeats follow at residues 901 to 910 (GSPSSSGSFG), 911 to 920 (GTLSTSICFG), 921 to 930 (GSPCTSTGFG), 931 to 940 (GTLSTSVSFG), and 941 to 950 (GSSSTSANFG). The stretch at 951-960 (GTLSTSICFD) is one 15; approximate repeat. 6 consecutive repeat copies span residues 961–970 (GSPSTGAGFG), 971–980 (GALNTSASFG), 981–990 (SVLNTSTGFG), 991–1000 (GAMSTSADFG), 1001–1010 (GTLSTSVCFG), and 1011–1020 (GSPGTSVSFG). The 22; approximate repeat unit spans residues 1021-1030 (SALNTNAGYG). Tandem repeats lie at residues 1031–1040 (GAVSTNTDFG), 1041–1050 (GTLSTSVCFG), 1051–1060 (GSPSTSAGFG), and 1061–1070 (GALNTNASFG). The stretch at 1071-1080 (CAVSTSASFS) is one 27; approximate repeat. One copy of the 28; approximate repeat lies at 1081–1090 (GAVSTSACFS). Tandem repeats lie at residues 1091 to 1100 (GAPITNPGFG), 1101 to 1110 (GAFSTSAGFG), 1111 to 1120 (GALSTAADFG), 1121 to 1130 (GTPSNSIGFG), 1131 to 1140 (AAPSTSVSFG), 1141 to 1150 (GAHGTSLCFG), 1151 to 1160 (GAPSTSLCFG), and 1161 to 1170 (SASNTNLCFG). The stretch at 1171–1180 (GPPSTSACFS) is one 37; approximate repeat. A 38; approximate repeat occupies 1181 to 1190 (GATSPSFCDG). Repeat copies occupy residues 1191–1200 (PSTSTGFSFG), 1201–1210 (NGLSTNAGFG), and 1211–1220 (GGLNTSAGFG). The 42; approximate repeat unit spans residues 1221–1230 (GGLGTSAGFS). The 43; approximate repeat unit spans residues 1231–1240 (GGLSTSSGFD). 2 repeat units span residues 1241–1250 (GGLGTSAGFG) and 1251–1260 (GGPGTSTGFG). One copy of the 46; approximate repeat lies at 1261–1270 (GGLGTSAGFS). Repeat copies occupy residues 1271–1280 (GGLGTSAGFG), 1281–1290 (GGLVTSDGFG), and 1291–1300 (GGLGTNASFG). The 50; approximate repeat unit spans residues 1301 to 1310 (STLGTSAGFS). Repeat unit 51 spans residues 1311-1320 (GGLSTSDGFG). One copy of the 52; approximate repeat lies at 1321–1330 (SRPNASFDRG). A 53; approximate repeat occupies 1331-1340 (LSTIIGFGSG). A 54; approximate repeat occupies 1341 to 1350 (SNTSTGFTGE). A compositionally biased stretch (low complexity) spans 1342-1363 (NTSTGFTGEPSTSTGFSSGPSS). The tract at residues 1342–1365 (NTSTGFTGEPSTSTGFSSGPSSIV) is disordered. The 55; approximate repeat unit spans residues 1351–1360 (PSTSTGFSSG). Residues 1361–1370 (PSSIVGFSGG) form a 56; approximate repeat. The 57; approximate repeat unit spans residues 1371–1380 (PSTGVGFCSG). A 58; approximate repeat occupies 1381-1390 (PSTSGFSGGP). A 59; approximate repeat occupies 1391-1400 (STGAGFGGGP). A 60; approximate repeat occupies 1401–1410 (NTGAGFGGGP). The stretch at 1411–1420 (STSAGFGSGA) is one 61; approximate repeat. A 62; approximate repeat occupies 1421–1430 (ASLGACGFSY).

In terms of assembly, directly binds bystin, and indirectly tastin. As to expression, strong expression at implantation sites. Found in the placenta from the sixth week of pregnancy. Was localized in the cytoplasm of the syncytiotrophoblast in the chorionic villi and in endometrial decidual cells at the uteroplacental interface. After week 10, the level decreased and then disappeared from placental villi. Also found in macrophages.

Its function is as follows. Could be involved with bystin and tastin in a cell adhesion molecule complex that mediates an initial attachment of the blastocyst to uterine epithelial cells at the time of the embryo implantation. Directly responsible for homophilic cell adhesion. The chain is Trophinin (TRO) from Homo sapiens (Human).